A 416-amino-acid chain; its full sequence is LL-diaminopimelate aminotransferase (416 aa).

2 residues coordinate substrate: tyrosine 25 and glycine 52. Pyridoxal 5'-phosphate contacts are provided by residues tyrosine 78, 115–116 (SK), tyrosine 140, asparagine 190, tyrosine 221, and 248–250 (SFS). Lysine 116, tyrosine 140, and asparagine 190 together coordinate substrate. Lysine 251 is subject to N6-(pyridoxal phosphate)lysine. Pyridoxal 5'-phosphate is bound at residue arginine 259.

The protein belongs to the class-I pyridoxal-phosphate-dependent aminotransferase family. Homodimer. Pyridoxal 5'-phosphate is required as a cofactor.

Its subcellular location is the cytoplasm. The catalysed reaction is (2S,6S)-2,6-diaminopimelate + 2-oxoglutarate = (S)-2,3,4,5-tetrahydrodipicolinate + L-glutamate + H2O + H(+). It functions in the pathway amino-acid biosynthesis; L-lysine biosynthesis via DAP pathway; LL-2,6-diaminopimelate from (S)-tetrahydrodipicolinate (aminotransferase route): step 1/1. Functionally, involved in the synthesis of meso-diaminopimelate (m-DAP or DL-DAP), required for both lysine and peptidoglycan biosynthesis. Catalyzes the direct conversion of tetrahydrodipicolinate to LL-diaminopimelate. This Methanococcus maripaludis (strain DSM 14266 / JCM 13030 / NBRC 101832 / S2 / LL) protein is LL-diaminopimelate aminotransferase (dapL).